Consider the following 72-residue polypeptide: Small, acid-soluble spore protein 1 (72 aa).

This sequence belongs to the alpha/beta-type SASP family.

In terms of biological role, SASP are bound to spore DNA. They are double-stranded DNA-binding proteins that cause DNA to change to an a-like conformation. They protect the DNA backbone from chemical and enzymatic cleavage and are thus involved in dormant spore's high resistance to UV light. This chain is Small, acid-soluble spore protein 1 (Sh-1), found in Halobacillus halophilus (strain ATCC 35676 / DSM 2266 / JCM 20832 / KCTC 3685 / LMG 17431 / NBRC 102448 / NCIMB 2269) (Sporosarcina halophila).